The sequence spans 273 residues: Dermonecrotic toxin LapSicTox-alphaIB1b2 (273 aa).

Residue His5 is part of the active site. Mg(2+) is bound by residues Glu25 and Asp27. Residue His41 is the Nucleophile of the active site. 2 disulfide bridges follow: Cys45/Cys51 and Cys47/Cys190. Asp85 is a binding site for Mg(2+). An N-linked (GlcNAc...) asparagine glycan is attached at Asn250.

Belongs to the arthropod phospholipase D family. Class II subfamily. The cofactor is Mg(2+). Expressed by the venom gland.

The protein resides in the secreted. It catalyses the reaction an N-(acyl)-sphingosylphosphocholine = an N-(acyl)-sphingosyl-1,3-cyclic phosphate + choline. The enzyme catalyses an N-(acyl)-sphingosylphosphoethanolamine = an N-(acyl)-sphingosyl-1,3-cyclic phosphate + ethanolamine. The catalysed reaction is a 1-acyl-sn-glycero-3-phosphocholine = a 1-acyl-sn-glycero-2,3-cyclic phosphate + choline. It carries out the reaction a 1-acyl-sn-glycero-3-phosphoethanolamine = a 1-acyl-sn-glycero-2,3-cyclic phosphate + ethanolamine. In terms of biological role, dermonecrotic toxins cleave the phosphodiester linkage between the phosphate and headgroup of certain phospholipids (sphingolipid and lysolipid substrates), forming an alcohol (often choline) and a cyclic phosphate. This toxin acts on sphingomyelin (SM). It may also act on ceramide phosphoethanolamine (CPE), lysophosphatidylcholine (LPC) and lysophosphatidylethanolamine (LPE), but not on lysophosphatidylserine (LPS), and lysophosphatidylglycerol (LPG). It acts by transphosphatidylation, releasing exclusively cyclic phosphate products as second products. Induces dermonecrosis, hemolysis, increased vascular permeability, edema, inflammatory response, and platelet aggregation. The chain is Dermonecrotic toxin LapSicTox-alphaIB1b2 from Loxosceles apachea (Apache recluse spider).